The chain runs to 329 residues: MSSTEPAAAAAGLAIPALGYGAANVGNLFRALSDDEAWAVLEAAWDAGIRYYDTAPHYGLGLSEKRLGAFLQTKPRDEFVVSTKAGRLLRPNPERRPSGLDTDNDFHVPDDLRREWDFTEQGIRASIAESQERLGLDRIDLLYLHDPERHDLDLALASAFPALEKVRAEGVVKAIGIGSMVSDALTRAVREADLDLIMVAGRYTLLEQPAATEVLPACAENATGIVAASVFNSGLLAQSEPKRDGRYEYGQLPDELWDRLVRIAAICRNHDVPLPAAAIQFPLQSALVRSVVVGGSRPAQLTQNAEYAALEIPAGLWAELAEARLIPTP.

Residue Tyr-58 is the Proton donor of the active site. Residue His-145 coordinates substrate.

This sequence belongs to the aldo/keto reductase family.

It carries out the reaction a D-threo-aldose + NAD(+) = a D-threo-aldono-1,5-lactone + NADH + H(+). Inhibited strongly by Hg(2+), Cd(2+) and para-chloromercuribenzoic acid (PCMB) and weakly by Zn(2+) and iodoacetamide. Also inhibited strongly by L-xylose but not D-glucose. Catalyzes the oxidation of L-fucose to L-fuconolactone in the presence of NADP(+). Also active against L-galactose and, to a much lesser degree, D-arabinose. Uses NADP(+) as a hydrogen acceptor much more efficiently than NAD(+). The sequence is that of D-threo-aldose 1-dehydrogenase from Pseudomonas sp.